Reading from the N-terminus, the 642-residue chain is MGSLFLAASQGELDTVKNLISSEKIDVNATDEGGATALHWAALNQQIPICKFLLEHGADVNAIGGDLQAAPIHWAAKRGSVKTVHYLVQHGADPLLKDKQGFNCLHLAVHAASPLLVVYLLHLDISVDLRDDQQHTPLMWASYHGNEPITNCLLRWGADVLATDEDKMTPLHWSIVGGNLKCMKLILKEGGIPCTAVTANLSGQLKTPWALASELRVSHLFKQALISNGLKVKETSEEPEKWVVVPSKFQFSQKTFIIFCFLSSFIITGVFFFIMSICPMVISLIIAPLWIYFTFKYITTCIHANIDIVHFYLETPFLAGIFSSIFFWVWCHSLLYIVPKTLPIKPLSSLLFVLISFTCIGLYVRTAFQNPGYVDKIGAVVQRREEISKLLDKDLFNQSHYCLKCFQVKPPRSYHCGACKRCINRYDHHCPWTGNCVGARNHRTFLLFVFTLSTLIPIYFYVAFYYLQNIPIQKKYESYRCLFISGTICQWSLKDMFVLVASLTLFVNWCWVVVLAFTQICQVAHNVTTAEFRLFKRYGTLVPPTKQNSSPKNGHGIHGSFLRTVCGILGLDQCILLIRESNCFVRCFPSRAELGSQNSTSLSRNLSTVNPYDEGSIIKNCKTFWKQNFLNDGRQDEATRHV.

ANK repeat units lie at residues 1-29 (MGSL…DVNA), 33-62 (GGAT…DVNA), 67-96 (LQAA…DPLL), 100-129 (QGFN…SVDL), 133-162 (QQHT…DVLA), and 166-196 (DKMT…PCTA). The Cytoplasmic portion of the chain corresponds to 1–256 (MGSLFLAASQ…SKFQFSQKTF (256 aa)). Helical transmembrane passes span 257–277 (IIFC…IMSI) and 278–298 (CPMV…FKYI). The Cytoplasmic segment spans residues 299–316 (TTCIHANIDIVHFYLETP). A helical transmembrane segment spans residues 317–337 (FLAGIFSSIFFWVWCHSLLYI). At 338-343 (VPKTLP) the chain is on the lumenal side. The chain crosses the membrane as a helical span at residues 344-364 (IKPLSSLLFVLISFTCIGLYV). At 365 to 444 (RTAFQNPGYV…NCVGARNHRT (80 aa)) the chain is on the cytoplasmic side. Residues 400-450 (HYCLKCFQVKPPRSYHCGACKRCINRYDHHCPWTGNCVGARNHRTFLLFVF) enclose the DHHC domain. The active-site S-palmitoyl cysteine intermediate is the C430. A helical transmembrane segment spans residues 445-465 (FLLFVFTLSTLIPIYFYVAFY). The Lumenal segment spans residues 466 to 496 (YLQNIPIQKKYESYRCLFISGTICQWSLKDM). A helical transmembrane segment spans residues 497-517 (FVLVASLTLFVNWCWVVVLAF). The Cytoplasmic portion of the chain corresponds to 518 to 642 (TQICQVAHNV…GRQDEATRHV (125 aa)).

It belongs to the DHHC palmitoyltransferase family. AKR/ZDHHC17 subfamily.

It localises to the early endosome membrane. Its subcellular location is the golgi apparatus membrane. The catalysed reaction is L-cysteinyl-[protein] + hexadecanoyl-CoA = S-hexadecanoyl-L-cysteinyl-[protein] + CoA. In terms of biological role, palmitoyltransferase specific for casein kinase 1. The protein is Palmitoyltransferase akr1 (akr1) of Schizosaccharomyces pombe (strain 972 / ATCC 24843) (Fission yeast).